The following is a 63-amino-acid chain: Hirudin (63 aa).

The interaction with thrombin active site stretch occupies residues 1–3; it reads VVY. 3 disulfide bridges follow: Cys6–Cys14, Cys16–Cys28, and Cys22–Cys39. Residues 39 to 63 form a disordered region; the sequence is CVTGEGTPGPQSHNDGDFEEPEEYL. O-linked (GalNAc...) threonine glycosylation is present at Thr45. Residues 55 to 63 form an interaction with fibrinogen-binding exosite of thrombin region; it reads DFEEPEEYL. Tyr62 is modified (sulfotyrosine).

Belongs to the protease inhibitor I14 (hirudin) family.

Its subcellular location is the secreted. Its function is as follows. Hirudin is a potent thrombin-specific protease inhibitor. It forms a stable non-covalent complex with alpha-thrombin, thereby abolishing its ability to cleave fibrinogen. This chain is Hirudin, found in Poecilobdella viridis (Indian freshwater leech).